The following is a 367-amino-acid chain: Heparan sulfate glucosamine 3-O-sulfotransferase 2 (367 aa).

At methionine 1–arginine 19 the chain is on the cytoplasmic side. Residues leucine 20–cysteine 39 form a helical; Signal-anchor for type II membrane protein membrane-spanning segment. Over cysteine 40–glutamate 367 the chain is Lumenal. The disordered stretch occupies residues alanine 61–glycine 110. The segment covering serine 84 to proline 96 has biased composition (low complexity). An N-linked (GlcNAc...) asparagine glycan is attached at asparagine 102. Position 124–128 (lysine 124–arginine 128) interacts with 3'-phosphoadenylyl sulfate. Substrate contacts are provided by residues glutamate 146–arginine 152 and lysine 177–serine 180. A glycan (N-linked (GlcNAc...) asparagine) is linked at asparagine 193. 3'-phosphoadenylyl sulfate contacts are provided by arginine 205 and serine 213. Asparagine 235 is a glycosylation site (N-linked (GlcNAc...) asparagine). Tryptophan 245–asparagine 246 is a binding site for substrate. N-linked (GlcNAc...) asparagine glycosylation is present at asparagine 306. Cysteines 313 and 325 form a disulfide. Position 330–334 (lysine 330–histidine 334) interacts with 3'-phosphoadenylyl sulfate.

This sequence belongs to the sulfotransferase 1 family. In terms of tissue distribution, highly expressed in the brain and weakly expressed in the heart, placenta, lung and skeletal muscle.

It is found in the golgi apparatus membrane. It catalyses the reaction alpha-D-glucosaminyl-[heparan sulfate](n) + 3'-phosphoadenylyl sulfate = 3-sulfo-alpha-D-glucosaminyl-[heparan sulfate](n) + adenosine 3',5'-bisphosphate + H(+). Functionally, sulfotransferase that utilizes 3'-phospho-5'-adenylyl sulfate (PAPS) to catalyze the transfer of a sulfo group to an N-unsubstituted glucosamine linked to a 2-O-sulfo iduronic acid unit on heparan sulfate. Catalyzes the O-sulfation of glucosamine in GlcA2S-GlcNS. Unlike HS3ST1/3-OST-1, does not convert non-anticoagulant heparan sulfate to anticoagulant heparan sulfate. This Homo sapiens (Human) protein is Heparan sulfate glucosamine 3-O-sulfotransferase 2 (HS3ST2).